Reading from the N-terminus, the 444-residue chain is Phosphoglucosamine mutase (444 aa).

S102 (phosphoserine intermediate) is an active-site residue. The Mg(2+) site is built by S102, D241, D243, and D245. Phosphoserine is present on S102.

Belongs to the phosphohexose mutase family. It depends on Mg(2+) as a cofactor. Activated by phosphorylation.

The catalysed reaction is alpha-D-glucosamine 1-phosphate = D-glucosamine 6-phosphate. Catalyzes the conversion of glucosamine-6-phosphate to glucosamine-1-phosphate. In Actinobacillus pleuropneumoniae serotype 7 (strain AP76), this protein is Phosphoglucosamine mutase.